The following is an 82-amino-acid chain: Ubiquinol-cytochrome-c reductase complex assembly factor 3 (82 aa).

The Mitochondrial matrix segment spans residues 1-6; the sequence is METVRR. Residues 7–29 form a helical membrane-spanning segment; sequence IVKGTLLLGFCTGIGGDLWVLVA. Over 30 to 82 the chain is Mitochondrial intermembrane; the sequence is PGQERRLEMRMNYPEANPPMLAEAHKRNEMVLKVIEESAKTNENMARRSPWSS.

Belongs to the UQCC3 family. In terms of assembly, associates with the ubiquinol-cytochrome c reductase complex (mitochondrial respiratory chain complex III or cytochrome b-c1 complex).

The protein localises to the mitochondrion inner membrane. Functionally, required for the assembly of the ubiquinol-cytochrome c reductase complex (mitochondrial respiratory chain complex III or cytochrome b-c1 complex), mediating cytochrome b recruitment and probably stabilization within the complex. Thereby, plays an important role in ATP production by mitochondria. Cardiolipin-binding protein, it may also control the cardiolipin composition of mitochondria membranes and their morphology. In Xenopus laevis (African clawed frog), this protein is Ubiquinol-cytochrome-c reductase complex assembly factor 3.